The primary structure comprises 259 residues: Thiazole synthase (259 aa).

Lys98 functions as the Schiff-base intermediate with DXP in the catalytic mechanism. Residues Gly159, 185 to 186 (AG), and 207 to 208 (NS) contribute to the 1-deoxy-D-xylulose 5-phosphate site.

Belongs to the ThiG family. Homotetramer. Forms heterodimers with either ThiH or ThiS.

Its subcellular location is the cytoplasm. It carries out the reaction [ThiS sulfur-carrier protein]-C-terminal-Gly-aminoethanethioate + 2-iminoacetate + 1-deoxy-D-xylulose 5-phosphate = [ThiS sulfur-carrier protein]-C-terminal Gly-Gly + 2-[(2R,5Z)-2-carboxy-4-methylthiazol-5(2H)-ylidene]ethyl phosphate + 2 H2O + H(+). It participates in cofactor biosynthesis; thiamine diphosphate biosynthesis. Its function is as follows. Catalyzes the rearrangement of 1-deoxy-D-xylulose 5-phosphate (DXP) to produce the thiazole phosphate moiety of thiamine. Sulfur is provided by the thiocarboxylate moiety of the carrier protein ThiS. In vitro, sulfur can be provided by H(2)S. In Chlorobaculum tepidum (strain ATCC 49652 / DSM 12025 / NBRC 103806 / TLS) (Chlorobium tepidum), this protein is Thiazole synthase.